Here is a 618-residue protein sequence, read N- to C-terminus: tRNA 5-methylaminomethyl-2-thiouridine biosynthesis bifunctional protein MnmC (618 aa).

A tRNA (mnm(5)s(2)U34)-methyltransferase region spans residues 1 to 231 (MLQTYAPIDF…KRHMLSAVYE (231 aa)). Residues 256 to 618 (IGAGIAGATT…KDIIRGHLNN (363 aa)) are FAD-dependent cmnm(5)s(2)U34 oxidoreductase.

This sequence in the N-terminal section; belongs to the methyltransferase superfamily. tRNA (mnm(5)s(2)U34)-methyltransferase family. In the C-terminal section; belongs to the DAO family. FAD serves as cofactor.

Its subcellular location is the cytoplasm. It carries out the reaction 5-aminomethyl-2-thiouridine(34) in tRNA + S-adenosyl-L-methionine = 5-methylaminomethyl-2-thiouridine(34) in tRNA + S-adenosyl-L-homocysteine + H(+). In terms of biological role, catalyzes the last two steps in the biosynthesis of 5-methylaminomethyl-2-thiouridine (mnm(5)s(2)U) at the wobble position (U34) in tRNA. Catalyzes the FAD-dependent demodification of cmnm(5)s(2)U34 to nm(5)s(2)U34, followed by the transfer of a methyl group from S-adenosyl-L-methionine to nm(5)s(2)U34, to form mnm(5)s(2)U34. The sequence is that of tRNA 5-methylaminomethyl-2-thiouridine biosynthesis bifunctional protein MnmC from Dichelobacter nodosus (strain VCS1703A).